Consider the following 137-residue polypeptide: Small ribosomal subunit protein uS12 (137 aa).

Residues 1–55 (MPTINQLVRKPRKSKTKQSDSPALNRGFNSKKKQFTNLNSPQKRGVCTRVGTMTP) form a disordered region. Residue aspartate 102 is modified to 3-methylthioaspartic acid. Residues 118-137 (SGVDGRRQGRSLYGTKKPKN) form a disordered region.

Belongs to the universal ribosomal protein uS12 family. Part of the 30S ribosomal subunit. Contacts proteins S8 and S17. May interact with IF1 in the 30S initiation complex.

Functionally, with S4 and S5 plays an important role in translational accuracy. Interacts with and stabilizes bases of the 16S rRNA that are involved in tRNA selection in the A site and with the mRNA backbone. Located at the interface of the 30S and 50S subunits, it traverses the body of the 30S subunit contacting proteins on the other side and probably holding the rRNA structure together. The combined cluster of proteins S8, S12 and S17 appears to hold together the shoulder and platform of the 30S subunit. The chain is Small ribosomal subunit protein uS12 from Staphylococcus epidermidis (strain ATCC 35984 / DSM 28319 / BCRC 17069 / CCUG 31568 / BM 3577 / RP62A).